The chain runs to 304 residues: Ornithine carbamoyltransferase (304 aa).

Carbamoyl phosphate is bound by residues 47–50 (STRT), Arg98, and 125–128 (HPCQ). L-ornithine is bound by residues Asn156, Asp221, and 225-226 (SM). Carbamoyl phosphate contacts are provided by residues 262–263 (CL) and Arg290.

It belongs to the aspartate/ornithine carbamoyltransferase superfamily. OTCase family.

It localises to the cytoplasm. The catalysed reaction is carbamoyl phosphate + L-ornithine = L-citrulline + phosphate + H(+). The protein operates within amino-acid biosynthesis; L-arginine biosynthesis; L-arginine from L-ornithine and carbamoyl phosphate: step 1/3. Reversibly catalyzes the transfer of the carbamoyl group from carbamoyl phosphate (CP) to the N(epsilon) atom of ornithine (ORN) to produce L-citrulline. This is Ornithine carbamoyltransferase from Methanococcus aeolicus (strain ATCC BAA-1280 / DSM 17508 / OCM 812 / Nankai-3).